We begin with the raw amino-acid sequence, 207 residues long: Large ribosomal subunit protein uL4 (207 aa).

The tract at residues 48-89 (THKVKNRSEVSGGGRKPWRQKGTGRARQGSIRSPQWRGGGTV) is disordered.

It belongs to the universal ribosomal protein uL4 family. As to quaternary structure, part of the 50S ribosomal subunit.

Its function is as follows. One of the primary rRNA binding proteins, this protein initially binds near the 5'-end of the 23S rRNA. It is important during the early stages of 50S assembly. It makes multiple contacts with different domains of the 23S rRNA in the assembled 50S subunit and ribosome. Forms part of the polypeptide exit tunnel. This Bacillus cytotoxicus (strain DSM 22905 / CIP 110041 / 391-98 / NVH 391-98) protein is Large ribosomal subunit protein uL4.